The sequence spans 682 residues: Guanylate cyclase soluble subunit beta-2 (682 aa).

Residue H43 participates in heme binding. In terms of domain architecture, Guanylate cyclase spans 408 to 536; that stretch reads TILFSDVVTF…DTVNTASRME (129 aa). The disordered stretch occupies residues 592–667; it reads MGRPSAPADG…QPSPDETKTS (76 aa). The span at 649–667 shows a compositional bias: polar residues; sequence RNSTDAVNNQPSPDETKTS.

This sequence belongs to the adenylyl cyclase class-4/guanylyl cyclase family. Heterodimer of an alpha and a beta chain. Heme serves as cofactor. In terms of tissue distribution, kidney and liver.

It localises to the cytoplasm. The enzyme catalyses GTP = 3',5'-cyclic GMP + diphosphate. Its activity is regulated as follows. Activated by nitric oxide in the presence of magnesium or manganese ions. The protein is Guanylate cyclase soluble subunit beta-2 (Gucy1b2) of Rattus norvegicus (Rat).